We begin with the raw amino-acid sequence, 278 residues long: Energy-coupling factor transporter ATP-binding protein EcfA1 (278 aa).

The region spanning 5–239 (IRVQHLNYTY…GMELLRLGLD (235 aa)) is the ABC transporter domain. 39–46 (GHNGSGKS) lines the ATP pocket. Glu-165 acts as the Proton acceptor in catalysis.

It belongs to the ABC transporter superfamily. Energy-coupling factor EcfA family. In terms of assembly, forms a stable energy-coupling factor (ECF) transporter complex probably composed of 2 membrane-embedded substrate-binding proteins (S component), 2 ATP-binding proteins (A component) and 2 transmembrane proteins (T component). This complex interacts with a number of substrate-specific components, including FolT and ThiT for 5-formyltetrahydrofolate and thiamine respectively.

It is found in the cell membrane. In terms of biological role, ATP-binding (A) component of a common energy-coupling factor (ECF) ABC-transporter complex. Unlike classic ABC transporters this ECF transporter provides the energy necessary to transport a number of different substrates including 5-formyltetrahydrofolate and thiamine. Expression of the complex plus FolT or ThiT in Lactococcus lactis subsp. cremoris (strain NZ9000) allows 5-formyltetrahydrofolate or thiamine uptake respectively; 5-formyltetrahydrofolate or thiamine are not taken up in the absence of FolT/ThiT or the EcfA1A2T complex. Deenergized L.lactis subsp. cremoris (treated with 2-deoxyglucose) does not take up substrate. The polypeptide is Energy-coupling factor transporter ATP-binding protein EcfA1 (Lacticaseibacillus paracasei (strain ATCC 334 / BCRC 17002 / CCUG 31169 / CIP 107868 / KCTC 3260 / NRRL B-441) (Lactobacillus paracasei)).